Reading from the N-terminus, the 292-residue chain is Ribosomal RNA small subunit methyltransferase I (292 aa).

It belongs to the methyltransferase superfamily. RsmI family.

It is found in the cytoplasm. It catalyses the reaction cytidine(1402) in 16S rRNA + S-adenosyl-L-methionine = 2'-O-methylcytidine(1402) in 16S rRNA + S-adenosyl-L-homocysteine + H(+). Catalyzes the 2'-O-methylation of the ribose of cytidine 1402 (C1402) in 16S rRNA. In Bacillus subtilis (strain 168), this protein is Ribosomal RNA small subunit methyltransferase I.